We begin with the raw amino-acid sequence, 786 residues long: MVNVERYEIFLDFNEYSYEGMEKIKMKSDGEKVELDSVGLEIKEVKADGKQVKYETKNEKLIVYSKVNEELEIRFSGKADNKSILGIYVAPYDGNYLITTQFEPIYARKFIPCFDSPDMKAVFKLSVRVNRGQKVISNMPIISIRDDGEKIVYEFDETPRMSTYLLYLGIGDFEEISDESKKPKIILATTPGKSKRGIFAIEVARKVIDYYEKYFEIPYQLPKLHLIEIPEFAAGAMENWGAITFRESALLADESSSVSQKLSVSAVIAHELAHQWFGDMVTLKWWDDLWLNESFATFMAYKSLKEIFPQWESEGHFIYDETLSALTEDSLLNTHPIETHVKDPHEIEEMFDNISYGKGASILRMIEAYVGEEVFRRGVVNYLNKFKFSNASGSDLWNSISEAYGSDISQIMAEWITKPGYPVITVNVEGDSVEFFQRRFTLLNVNDSTIYKVPLTFEVNGKRQTLLLDKESVKLNFDNAVSSIKVNLNRTGFYRVLYKPFELSFSSTLNSYEELGLVNDYWNFLLAGLESIKTYLTLIKRFSNTRNSFLSREIAFELMTLYYINKDKYYSIARDFLLNQIKIYRNAKDDLGKMAYSSIIRSLAIVDDDFALGLSNLFQYYEQLDSNIKGAVAIAYAISTSDFNGLLDKYKSFNSDEEKLRMIDAITNIRDKSIVEKLAMLVFNRTIKYQEAPHVINSLSNNPYVREELCNFLQGNFDMIKQFVVTVAGMWGLFYIIRGPMIMCGVNKPEETIEFLDRIKTKEIARSVEITKEYIKVYNRVKNLDL.

Substrate is bound by residues Glu103 and 235-239 (GAMEN). His270 contacts Zn(2+). Glu271 functions as the Proton acceptor in the catalytic mechanism. Zn(2+) contacts are provided by His274 and Glu293.

It belongs to the peptidase M1 family. Zn(2+) serves as cofactor.

It localises to the cytoplasm. The sequence is that of Probable aminopeptidase 1 (ape1) from Sulfurisphaera tokodaii (strain DSM 16993 / JCM 10545 / NBRC 100140 / 7) (Sulfolobus tokodaii).